We begin with the raw amino-acid sequence, 45 residues long: Lysis protein for colicin E1* (45 aa).

The N-terminal stretch at 1–17 (MRKRFFVGIFAINLLVG) is a signal peptide. A lipid anchor (N-palmitoyl cysteine) is attached at C18. C18 is lipidated: S-diacylglycerol cysteine.

Its subcellular location is the cell outer membrane. Functionally, lysis proteins are required for both colicin release and partial cell lysis. The polypeptide is Lysis protein for colicin E1* (kil) (Shigella sonnei).